We begin with the raw amino-acid sequence, 246 residues long: DNA repair protein RecO (246 aa).

The protein belongs to the RecO family.

Involved in DNA repair and RecF pathway recombination. This is DNA repair protein RecO from Bifidobacterium adolescentis (strain ATCC 15703 / DSM 20083 / NCTC 11814 / E194a).